Reading from the N-terminus, the 561-residue chain is Oligo-1,6-glucosidase (561 aa).

Asp199 (nucleophile) is an active-site residue. Glu256 acts as the Proton donor in catalysis.

The protein belongs to the glycosyl hydrolase 13 family.

The protein resides in the cytoplasm. The enzyme catalyses Hydrolysis of (1-&gt;6)-alpha-D-glucosidic linkages in some oligosaccharides produced from starch and glycogen by alpha-amylase, and in isomaltose.. In Halalkalibacterium halodurans (strain ATCC BAA-125 / DSM 18197 / FERM 7344 / JCM 9153 / C-125) (Bacillus halodurans), this protein is Oligo-1,6-glucosidase (malL).